The sequence spans 165 residues: MASGVQVADEVCRIFYDMKVRKCSTPEEIKKRKKAVIFCLSADKKCIVVEEGKEILVGDVGVTITDPFKHFVGMLPEKDCRYALYDASFETKESRKEELMFFLWAPEQAPLKSKMIYASSKDAIKKKFPGIKHEYQANGPEDLNRTSIAEKLGGSLIVAFEGSPV.

At Ala-2 the chain carries N-acetylalanine. Ser-3 carries the post-translational modification Phosphoserine. An ADF-H domain is found at 4 to 153; the sequence is GVQVADEVCR…NRTSIAEKLG (150 aa). Residue Lys-19 is modified to N6-acetyllysine. Residues 30 to 34 carry the Nuclear localization signal motif; the sequence is KKRKK.

The protein belongs to the actin-binding proteins ADF family. ISGylated.

Its function is as follows. Actin-depolymerizing protein. Severs actin filaments (F-actin) and binds to actin monomers (G-actin). Acts in a pH-independent manner. The polypeptide is Destrin (Dstn) (Rattus norvegicus (Rat)).